The sequence spans 472 residues: MIPIIALVGRPNVGKSTLFNKLTHTNDAIVADYSGLTRDRKYGHAKWKNYNFIVIDTGGIGISKKGLAIHIIKQSLLAIKEADVIFFVVDAITGLMIEDQSIAKYLRKLQKPTFIIINKIDGIDITQVKLQFYAINIGQIFPIAALQGRGINILLKAVFLSLIQNNIPLTNNSFTESTKYIDQLLMPIKLAIVGSSNVGKSTLANSFLGEERVVVFDMPGTTRDSTYIPMIRAEREYVLIDTAGLRKRSKITDIAEKLSTVKTLQSIEESNVVLLVLDAHKGISDQDLSLLSLIIDSGRAFVIVVNKWDNLSIERRNSIKDTLAYRLSFINFARIHFISALYGTNIDQIFQSVNEAYHCSTKRISTALLTKILHIAIKEHQPPIISGYRVKLKYAHYGGYNPPIVVIHGNKATELPVSYKRYLSNFFRHSLQIMGTPIRIQFNEPANPFIHHKSIPNKLRKLLLSKRNIKIK.

EngA-type G domains lie at 3 to 166 (PIIA…IQNN) and 188 to 361 (IKLA…HCST). GTP contacts are provided by residues 9-16 (GRPNVGKS), 56-60 (DTGGI), 118-121 (NKID), 194-201 (GSSNVGKS), 241-245 (DTAGL), and 306-309 (NKWD). Residues 362–446 (KRISTALLTK…PIRIQFNEPA (85 aa)) form the KH-like domain.

It belongs to the TRAFAC class TrmE-Era-EngA-EngB-Septin-like GTPase superfamily. EngA (Der) GTPase family. As to quaternary structure, associates with the 50S ribosomal subunit.

GTPase that plays an essential role in the late steps of ribosome biogenesis. The sequence is that of GTPase Der from Baumannia cicadellinicola subsp. Homalodisca coagulata.